A 408-amino-acid chain; its full sequence is 3-ketoacyl-CoA thiolase A, peroxisomal (408 aa).

The Acyl-thioester intermediate role is filled by Cys-112. Active-site proton acceptor residues include His-366 and Cys-394.

This sequence belongs to the thiolase-like superfamily. Thiolase family. In terms of assembly, homodimer.

Its subcellular location is the peroxisome. It carries out the reaction an acyl-CoA + acetyl-CoA = a 3-oxoacyl-CoA + CoA. It functions in the pathway lipid metabolism; fatty acid metabolism. This is 3-ketoacyl-CoA thiolase A, peroxisomal from Candida tropicalis (Yeast).